The primary structure comprises 672 residues: GPI mannosyltransferase pigv-1 (672 aa).

The Cytoplasmic portion of the chain corresponds to 1 to 134; that stretch reads MRRREPGRDV…TQRCLGFCFR (134 aa). A compositionally biased stretch (basic and acidic residues) spans 82-94; that stretch reads REESDSSSSREDS. Positions 82–115 are disordered; sequence REESDSSSSREDSPLGSTETGESCSTTDDEESKE. Over residues 97–107 the composition is skewed to low complexity; sequence GSTETGESCST. A helical membrane pass occupies residues 135–155; that stretch reads QLFFSRMWVFILQFIASYYAG. The Extracellular portion of the chain corresponds to 156–239; sequence DRFRTDGFNL…NGMESVFGWT (84 aa). The helical transmembrane segment at 240 to 260 threads the bilayer; the sequence is FPPWVTITLAAVFVNLFCFLL. Over 261-277 the chain is Cytoplasmic; that stretch reads CGMTLYQVVLIMTRSVK. The next 2 helical transmembrane spans lie at 278-298 and 299-319; these read ISLL…FSSA and YSES…LFGL. Over 320 to 345 the chain is Extracellular; sequence RGKGFWHRMLKGFTGTICFGLTFAVR. The helical transmembrane segment at 346-366 threads the bilayer; sequence SNGLLNFLYVAWIWCGTLLWD. At 367 to 423 the chain is on the cytoplasmic side; the sequence is EEMPIPDCHKLISTLAATKNERYKQEWQAKFWRFQQKRKQNRKVFRWTDPNFSRCVT. A helical transmembrane segment spans residues 424–444; that stretch reads LFIVIVCAISATLLFFTPYVF. The Extracellular portion of the chain corresponds to 445–520; that stretch reads MTNFTADEFC…WSVKFFGYWK (76 aa). The helical transmembrane segment at 521-541 threads the bilayer; that stretch reads IKKIPCFLMMLPAAILTVLAI. The Cytoplasmic portion of the chain corresponds to 542 to 569; it reads KSSWNDVFLNKRWNNIWVLTARSDHSLP. The chain crosses the membrane as a helical span at residues 570-590; sequence MAIHSSVLLFVAIFYINSEVF. The Extracellular segment spans residues 591 to 592; it reads TR. The chain crosses the membrane as a helical span at residues 593-613; that stretch reads IIFSSSPFIYIYIATYIDKLT. At 614 to 648 the chain is on the cytoplasmic side; that stretch reads QGTIAGNRLWQYFESPGILPFFVFRRVWQDGWRGK. A helical membrane pass occupies residues 649–669; the sequence is LLYIYILGYFVFGTMAHSAWL. At 670-672 the chain is on the extracellular side; it reads PFT.

This sequence belongs to the PIGV family. As to expression, expressed in epithelial tissues including the epidermis, pharynx, intestine, rectum and excretory cell during embryogenesis.

It is found in the endoplasmic reticulum membrane. Its pathway is glycolipid biosynthesis; glycosylphosphatidylinositol-anchor biosynthesis. Its function is as follows. Alpha-1,6-mannosyltransferase involved in glycosylphosphatidylinositol-anchor biosynthesis. Transfers the second mannose to the glycosylphosphatidylinositol during GPI precursor assembly. Required for maintenance of epithelial integrity during embryogenesis. This chain is GPI mannosyltransferase pigv-1, found in Caenorhabditis elegans.